Reading from the N-terminus, the 772-residue chain is NAD(P)H-quinone oxidoreductase subunit 5, chloroplastic (772 aa).

Transmembrane regions (helical) follow at residues 8 to 28 (IWIV…GLFF), 39 to 59 (ICAI…FSIF), 87 to 107 (FLID…GILV), 120 to 140 (GYVR…GLVL), 147 to 167 (IYIF…FWFS), 185 to 205 (GDFG…SFDI), 219 to 239 (NGVN…GPAA), 258 to 278 (TPIS…FFVA), 291 to 311 (MNII…IALA), 395 to 415 (GTTF…ACFW), 425 to 445 (WIAS…TGFY), 574 to 594 (LFSL…GVPF), 631 to 651 (IPSV…YGPV), 710 to 730 (WIID…GEGM), and 738 to 758 (IPSY…ILII).

Belongs to the complex I subunit 5 family. As to quaternary structure, NDH is composed of at least 16 different subunits, 5 of which are encoded in the nucleus.

The protein resides in the plastid. It localises to the chloroplast thylakoid membrane. The enzyme catalyses a plastoquinone + NADH + (n+1) H(+)(in) = a plastoquinol + NAD(+) + n H(+)(out). The catalysed reaction is a plastoquinone + NADPH + (n+1) H(+)(in) = a plastoquinol + NADP(+) + n H(+)(out). Its function is as follows. NDH shuttles electrons from NAD(P)H:plastoquinone, via FMN and iron-sulfur (Fe-S) centers, to quinones in the photosynthetic chain and possibly in a chloroplast respiratory chain. The immediate electron acceptor for the enzyme in this species is believed to be plastoquinone. Couples the redox reaction to proton translocation, and thus conserves the redox energy in a proton gradient. This chain is NAD(P)H-quinone oxidoreductase subunit 5, chloroplastic (ndhF), found in Angiopteris evecta (Mule's foot fern).